The primary structure comprises 175 residues: Protein LpfE (175 aa).

Residues 1-20 form the signal peptide; sequence MKNLHALMPACLLLTASAMA.

Belongs to the fimbrial protein family.

It is found in the fimbrium. This Salmonella typhimurium (strain LT2 / SGSC1412 / ATCC 700720) protein is Protein LpfE (lpfE).